Consider the following 27-residue polypeptide: Cationic protein C1 (27 aa).

It is found in the secreted. Its subcellular location is the nematocyst. The polypeptide is Cationic protein C1 (Bunodosoma caissarum (Sea anemone)).